Here is a 392-residue protein sequence, read N- to C-terminus: Major outer membrane porin (392 aa).

The signal sequence occupies residues 1 to 22; that stretch reads MKKLLKSALLFAAAGSALSLQA.

Belongs to the chlamydial porin (CP) (TC 1.B.2) family. Part of a disulfide cross-linked outer membrane complex (COMC) composed of the major outer membrane porin (MOMP), the small cysteine-rich protein (OmcA) and the large cysteine-rich periplasmic protein (OmcB).

Its subcellular location is the cell outer membrane. In terms of biological role, in elementary bodies (EBs, the infectious stage, which is able to survive outside the host cell) provides the structural integrity of the outer envelope through disulfide cross-links with the small cysteine-rich protein and the large cysteine-rich periplasmic protein. It has been described in publications as the Sarkosyl-insoluble COMC (Chlamydia outer membrane complex), and serves as the functional equivalent of peptidoglycan. Its function is as follows. Permits diffusion of specific solutes through the outer membrane. The protein is Major outer membrane porin (ompA) of Chlamydia psittaci (Chlamydophila psittaci).